The primary structure comprises 274 residues: Glutamate--cysteine ligase regulatory subunit (274 aa).

At Ser59 the chain carries Phosphoserine. Lys263 is subject to N6-acetyllysine.

The protein belongs to the aldo/keto reductase family. Glutamate--cysteine ligase light chain subfamily. In terms of assembly, heterodimer of a catalytic heavy chain and a regulatory light chain.

The protein operates within sulfur metabolism; glutathione biosynthesis; glutathione from L-cysteine and L-glutamate: step 1/2. The chain is Glutamate--cysteine ligase regulatory subunit (GCLM) from Bos taurus (Bovine).